The following is a 101-amino-acid chain: ATP-dependent Clp protease adapter protein ClpS 2 (101 aa).

This sequence belongs to the ClpS family. As to quaternary structure, binds to the N-terminal domain of the chaperone ClpA.

In terms of biological role, involved in the modulation of the specificity of the ClpAP-mediated ATP-dependent protein degradation. The polypeptide is ATP-dependent Clp protease adapter protein ClpS 2 (Rhizobium meliloti (strain 1021) (Ensifer meliloti)).